A 239-amino-acid chain; its full sequence is Thymidylate kinase (239 aa).

10–17 is an ATP binding site; that stretch reads GINGVGKS.

This sequence belongs to the thymidylate kinase family.

The catalysed reaction is dTMP + ATP = dTDP + ADP. The protein operates within pyrimidine metabolism; dTTP biosynthesis. Functionally, catalyzes the conversion of dTMP to dTDP. The polypeptide is Thymidylate kinase (TMK) (African swine fever virus (isolate Warthog/Namibia/Wart80/1980) (ASFV)).